We begin with the raw amino-acid sequence, 169 residues long: Crossover junction endodeoxyribonuclease RuvC (169 aa).

Residues D12, E72, and D144 contribute to the active site. 3 residues coordinate Mg(2+): D12, E72, and D144.

This sequence belongs to the RuvC family. As to quaternary structure, homodimer which binds Holliday junction (HJ) DNA. The HJ becomes 2-fold symmetrical on binding to RuvC with unstacked arms; it has a different conformation from HJ DNA in complex with RuvA. In the full resolvosome a probable DNA-RuvA(4)-RuvB(12)-RuvC(2) complex forms which resolves the HJ. The cofactor is Mg(2+).

The protein resides in the cytoplasm. It carries out the reaction Endonucleolytic cleavage at a junction such as a reciprocal single-stranded crossover between two homologous DNA duplexes (Holliday junction).. Its function is as follows. The RuvA-RuvB-RuvC complex processes Holliday junction (HJ) DNA during genetic recombination and DNA repair. Endonuclease that resolves HJ intermediates. Cleaves cruciform DNA by making single-stranded nicks across the HJ at symmetrical positions within the homologous arms, yielding a 5'-phosphate and a 3'-hydroxyl group; requires a central core of homology in the junction. The consensus cleavage sequence is 5'-(A/T)TT(C/G)-3'. Cleavage occurs on the 3'-side of the TT dinucleotide at the point of strand exchange. HJ branch migration catalyzed by RuvA-RuvB allows RuvC to scan DNA until it finds its consensus sequence, where it cleaves and resolves the cruciform DNA. The chain is Crossover junction endodeoxyribonuclease RuvC from Azorhizobium caulinodans (strain ATCC 43989 / DSM 5975 / JCM 20966 / LMG 6465 / NBRC 14845 / NCIMB 13405 / ORS 571).